We begin with the raw amino-acid sequence, 411 residues long: Serpin A3-2 (411 aa).

A signal peptide spans 1–24 (MRAERTSFLLALGLLVAGIRSVHC). Residues N100, N180, N230, and N264 are each glycosylated (N-linked (GlcNAc...) asparagine).

This sequence belongs to the serpin family. Homodimer.

The protein resides in the cytoplasmic vesicle. It is found in the secretory vesicle. The protein localises to the chromaffin granule. Its subcellular location is the secreted. In terms of biological role, serine protease inhibitor. The sequence is that of Serpin A3-2 from Bos taurus (Bovine).